The chain runs to 1003 residues: Trifunctional purine biosynthetic protein adenosine-3 (1003 aa).

One can recognise an ATP-grasp domain in the interval 111–318; it reads KSFLDRHGIP…LYEVMQAVIN (208 aa). ATP contacts are provided by residues 190–193, E197, R220, and N229; that span reads EELL. The tract at residues 214–235 is disordered; it reads PAQDHKRLKDGDEGPNTGGMGA. The segment covering 216-225 has biased composition (basic and acidic residues); it reads QDHKRLKDGD. Residues E288 and N290 each coordinate Mg(2+). An AIRS domain region spans residues 434-805; the sequence is GLTYKNSGVD…QGKIQTNKVK (372 aa). Residues 806–1003 form a GART domain region; sequence VAVLISGTGT…VGEAGKICWK (198 aa). 814–816 serves as a coordination point for N(1)-(5-phospho-beta-D-ribosyl)glycinamide; sequence GTN. (6R)-10-formyltetrahydrofolate contacts are provided by residues R867, 892–895, and N909; that span reads MRIL. The Proton donor role is filled by H911. 943 to 947 lines the (6R)-10-formyltetrahydrofolate pocket; that stretch reads AEEVD. 973–976 contributes to the N(1)-(5-phospho-beta-D-ribosyl)glycinamide binding site; it reads KEAE.

This sequence in the N-terminal section; belongs to the GARS family. It in the central section; belongs to the AIR synthase family. The protein in the C-terminal section; belongs to the GART family. In terms of assembly, homodimer. The cofactor is Mg(2+). Requires Mn(2+) as cofactor.

The catalysed reaction is 5-phospho-beta-D-ribosylamine + glycine + ATP = N(1)-(5-phospho-beta-D-ribosyl)glycinamide + ADP + phosphate + H(+). It carries out the reaction 2-formamido-N(1)-(5-O-phospho-beta-D-ribosyl)acetamidine + ATP = 5-amino-1-(5-phospho-beta-D-ribosyl)imidazole + ADP + phosphate + H(+). The enzyme catalyses N(1)-(5-phospho-beta-D-ribosyl)glycinamide + (6R)-10-formyltetrahydrofolate = N(2)-formyl-N(1)-(5-phospho-beta-D-ribosyl)glycinamide + (6S)-5,6,7,8-tetrahydrofolate + H(+). Its pathway is purine metabolism; IMP biosynthesis via de novo pathway; 5-amino-1-(5-phospho-D-ribosyl)imidazole from N(2)-formyl-N(1)-(5-phospho-D-ribosyl)glycinamide: step 2/2. It participates in purine metabolism; IMP biosynthesis via de novo pathway; N(1)-(5-phospho-D-ribosyl)glycinamide from 5-phospho-alpha-D-ribose 1-diphosphate: step 2/2. It functions in the pathway purine metabolism; IMP biosynthesis via de novo pathway; N(2)-formyl-N(1)-(5-phospho-D-ribosyl)glycinamide from N(1)-(5-phospho-D-ribosyl)glycinamide (10-formyl THF route): step 1/1. Trifunctional enzyme that catalyzes three distinct reactions as part of the 'de novo' inosine monophosphate biosynthetic pathway. In Gallus gallus (Chicken), this protein is Trifunctional purine biosynthetic protein adenosine-3 (GART).